Reading from the N-terminus, the 159-residue chain is UPF0262 protein Dshi_0980 (159 aa).

It belongs to the UPF0262 family.

This is UPF0262 protein Dshi_0980 from Dinoroseobacter shibae (strain DSM 16493 / NCIMB 14021 / DFL 12).